A 129-amino-acid chain; its full sequence is Small ribosomal subunit protein uS11 (129 aa).

This sequence belongs to the universal ribosomal protein uS11 family. In terms of assembly, part of the 30S ribosomal subunit. Interacts with proteins S7 and S18. Binds to IF-3.

Its function is as follows. Located on the platform of the 30S subunit, it bridges several disparate RNA helices of the 16S rRNA. Forms part of the Shine-Dalgarno cleft in the 70S ribosome. The protein is Small ribosomal subunit protein uS11 of Levilactobacillus brevis (strain ATCC 367 / BCRC 12310 / CIP 105137 / JCM 1170 / LMG 11437 / NCIMB 947 / NCTC 947) (Lactobacillus brevis).